Reading from the N-terminus, the 207-residue chain is Hydrogenase expression/formation protein HoxM (207 aa).

Ni(2+) contacts are provided by Glu-19, Asp-65, and His-96.

The protein belongs to the peptidase A31 family.

Functionally, not known. Could be involved in the processing of hydrogenase. The polypeptide is Hydrogenase expression/formation protein HoxM (hoxM) (Azotobacter vinelandii).